A 604-amino-acid polypeptide reads, in one-letter code: Elongation factor 4 (604 aa).

In terms of domain architecture, tr-type G spans 7–189; the sequence is SRLRNFCIIA…AVVDRIPPPA (183 aa). GTP is bound by residues 19 to 24 and 136 to 139; these read DHGKST and NKID.

Belongs to the TRAFAC class translation factor GTPase superfamily. Classic translation factor GTPase family. LepA subfamily.

It localises to the cell inner membrane. It carries out the reaction GTP + H2O = GDP + phosphate + H(+). In terms of biological role, required for accurate and efficient protein synthesis under certain stress conditions. May act as a fidelity factor of the translation reaction, by catalyzing a one-codon backward translocation of tRNAs on improperly translocated ribosomes. Back-translocation proceeds from a post-translocation (POST) complex to a pre-translocation (PRE) complex, thus giving elongation factor G a second chance to translocate the tRNAs correctly. Binds to ribosomes in a GTP-dependent manner. The protein is Elongation factor 4 of Prochlorococcus marinus (strain MIT 9313).